Reading from the N-terminus, the 268-residue chain is Tryptophan synthase alpha chain (268 aa).

Active-site proton acceptor residues include E49 and D60.

This sequence belongs to the TrpA family. As to quaternary structure, tetramer of two alpha and two beta chains.

The catalysed reaction is (1S,2R)-1-C-(indol-3-yl)glycerol 3-phosphate + L-serine = D-glyceraldehyde 3-phosphate + L-tryptophan + H2O. The protein operates within amino-acid biosynthesis; L-tryptophan biosynthesis; L-tryptophan from chorismate: step 5/5. In terms of biological role, the alpha subunit is responsible for the aldol cleavage of indoleglycerol phosphate to indole and glyceraldehyde 3-phosphate. This chain is Tryptophan synthase alpha chain, found in Escherichia coli (strain SE11).